We begin with the raw amino-acid sequence, 293 residues long: Notch homolog 2 N-terminal-like protein C (293 aa).

4 EGF-like domains span residues 42 to 81, 82 to 120, 123 to 161, and 162 to 198; these read PPRMCRDGYEPCVNEGMCVTYHNGTGYCKCPEGFLGEYCQ, HRDPCEKNRCQNGGTCVAQAMLGKATCRCASGFTGEDCQ, TSHPCFVSRPCLNGGTCHMLSRDTYECTCQVGFTGKECQ, and WTDACLSHPCANGSTCTTVANQFSCKCLTGFTGQKCE. 17 cysteine pairs are disulfide-bonded: cysteine 46-cysteine 59, cysteine 53-cysteine 69, cysteine 71-cysteine 80, cysteine 86-cysteine 97, cysteine 91-cysteine 108, cysteine 110-cysteine 119, cysteine 127-cysteine 139, cysteine 133-cysteine 149, cysteine 151-cysteine 160, cysteine 166-cysteine 177, cysteine 171-cysteine 186, cysteine 188-cysteine 197, cysteine 204-cysteine 216, cysteine 210-cysteine 225, cysteine 227-cysteine 236, cysteine 243-cysteine 254, and cysteine 248-cysteine 264. The N-linked (GlcNAc...) asparagine glycan is linked to asparagine 64. The N-linked (GlcNAc...) asparagine glycan is linked to asparagine 173. Residues 200–237 form the EGF-like 5; calcium-binding domain; the sequence is DVNECDIPGHCQHGGTCLNLPGSYQCQCLQGFTGQYCD. The EGF-like 6 domain maps to 239–276; sequence LYVPCAPSPCVNGGTCRQTGDFTFECNCLPETVRRGTE.

It belongs to the NOTCH family. As to quaternary structure, interacts with NOTCH2. Interacts with DLL1; the interaction is direct. In terms of tissue distribution, expressed in radial glia neural stem cells during cortical development.

It is found in the secreted. Its function is as follows. Human-specific protein that promotes neural progenitor proliferation and evolutionary expansion of the brain neocortex by regulating the Notch signaling pathway. Able to promote neural progenitor self-renewal, possibly by down-regulating neuronal differentiation genes, thereby delaying the differentiation of neuronal progenitors and leading to an overall final increase in neuronal production. Acts by enhancing the Notch signaling pathway via two different mechanisms that probably work in parallel to reach the same effect. Enhances Notch signaling pathway in a non-cell-autonomous manner via direct interaction with NOTCH2. Also promotes Notch signaling pathway in a cell-autonomous manner through inhibition of cis DLL1-NOTCH2 interactions, which promotes neuronal differentiation. This chain is Notch homolog 2 N-terminal-like protein C, found in Homo sapiens (Human).